A 271-amino-acid polypeptide reads, in one-letter code: ATP synthase subunit a (271 aa).

A run of 5 helical transmembrane segments spans residues 38–58, 100–120, 146–166, 211–231, and 242–262; these read FWTLNIDSMFFSVVLGLLFLA, VIAPLALTVFVWVFLMNLMDL, DVNITLSMALGVFILIIFYSI, LFGNMYAGELIFILIAGLLPW, and AIFHILIITLQAFIFMVLTIV.

It belongs to the ATPase A chain family. As to quaternary structure, F-type ATPases have 2 components, CF(1) - the catalytic core - and CF(0) - the membrane proton channel. CF(1) has five subunits: alpha(3), beta(3), gamma(1), delta(1), epsilon(1). CF(0) has three main subunits: a(1), b(2) and c(9-12). The alpha and beta chains form an alternating ring which encloses part of the gamma chain. CF(1) is attached to CF(0) by a central stalk formed by the gamma and epsilon chains, while a peripheral stalk is formed by the delta and b chains.

The protein resides in the cell inner membrane. Key component of the proton channel; it plays a direct role in the translocation of protons across the membrane. The polypeptide is ATP synthase subunit a (Klebsiella pneumoniae (strain 342)).